Here is a 642-residue protein sequence, read N- to C-terminus: Probable Xaa-Pro aminopeptidase P (642 aa).

Asp-439, Asp-450, Glu-548, and Glu-562 together coordinate Mn(2+).

Belongs to the peptidase M24B family. Mn(2+) is required as a cofactor.

It carries out the reaction Release of any N-terminal amino acid, including proline, that is linked to proline, even from a dipeptide or tripeptide.. In terms of biological role, catalyzes the removal of a penultimate prolyl residue from the N-termini of peptides. The chain is Probable Xaa-Pro aminopeptidase P (AMPP) from Laccaria bicolor (strain S238N-H82 / ATCC MYA-4686) (Bicoloured deceiver).